We begin with the raw amino-acid sequence, 354 residues long: Uroporphyrinogen decarboxylase (354 aa).

Substrate-binding positions include 27–31 (RQAGR), Asp77, Tyr154, Ser209, and His327.

It belongs to the uroporphyrinogen decarboxylase family. As to quaternary structure, homodimer.

The protein localises to the cytoplasm. It carries out the reaction uroporphyrinogen III + 4 H(+) = coproporphyrinogen III + 4 CO2. It functions in the pathway porphyrin-containing compound metabolism; protoporphyrin-IX biosynthesis; coproporphyrinogen-III from 5-aminolevulinate: step 4/4. Catalyzes the decarboxylation of four acetate groups of uroporphyrinogen-III to yield coproporphyrinogen-III. The protein is Uroporphyrinogen decarboxylase of Shewanella sp. (strain ANA-3).